We begin with the raw amino-acid sequence, 653 residues long: Poly [ADP-ribose] polymerase 2 (653 aa).

An SAP 1 domain is found at 2-36; it reads SARLRVADVRAELQRRGLDVSGTKPALVRRLDAAI. A disordered region spans residues 64-84; it reads NCGNNKRKRSGDGGEEGNGDT. A Nuclear localization signal motif is present at residues 69 to 72; sequence KRKR. One can recognise an SAP 2 domain in the interval 91–125; the sequence is LEGMSYRELQGLAKARGVAANGGKKDVIQRLLSAT. The WGR domain maps to 179–276; that stretch reads NYHVLQVGDE…KNFKCYAKKY (98 aa). Positions 301-419 constitute a PARP alpha-helical domain; sequence ETKLETRIAQ…EIEIATKLLE (119 aa). Residues 427–653 enclose the PARP catalytic domain; that stretch reads DPLYARYKQL…LHVNFNFKRR (227 aa).

This sequence belongs to the ARTD/PARP family.

The protein localises to the nucleus. It carries out the reaction NAD(+) + (ADP-D-ribosyl)n-acceptor = nicotinamide + (ADP-D-ribosyl)n+1-acceptor + H(+).. It catalyses the reaction L-aspartyl-[protein] + NAD(+) = 4-O-(ADP-D-ribosyl)-L-aspartyl-[protein] + nicotinamide. The enzyme catalyses L-glutamyl-[protein] + NAD(+) = 5-O-(ADP-D-ribosyl)-L-glutamyl-[protein] + nicotinamide. Functionally, involved in the base excision repair (BER) pathway, by catalyzing the poly(ADP-ribosyl)ation of a limited number of acceptor proteins involved in chromatin architecture and in DNA metabolism. This modification follows DNA damages and appears as an obligatory step in a detection/signaling pathway leading to the reparation of DNA strand breaks. This is Poly [ADP-ribose] polymerase 2 (PARP2) from Zea mays (Maize).